The primary structure comprises 310 residues: HPr kinase/phosphorylase (310 aa).

Active-site residues include H136 and K157. 151-158 (GDSGIGKS) is an ATP binding site. S158 lines the Mg(2+) pocket. Residue D175 is the Proton acceptor; for phosphorylation activity. Proton donor; for dephosphorylation activity of the active site. Residues 199–208 (LEIRGLGIIN) form an important for the catalytic mechanism of both phosphorylation and dephosphorylation region. E200 provides a ligand contact to Mg(2+). Residue R241 is part of the active site. An important for the catalytic mechanism of dephosphorylation region spans residues 262–267 (PVRPGR).

It belongs to the HPrK/P family. Homohexamer. The cofactor is Mg(2+).

It catalyses the reaction [HPr protein]-L-serine + ATP = [HPr protein]-O-phospho-L-serine + ADP + H(+). The enzyme catalyses [HPr protein]-O-phospho-L-serine + phosphate + H(+) = [HPr protein]-L-serine + diphosphate. Functionally, catalyzes the ATP- as well as the pyrophosphate-dependent phosphorylation of a specific serine residue in HPr, a phosphocarrier protein of the phosphoenolpyruvate-dependent sugar phosphotransferase system (PTS). HprK/P also catalyzes the pyrophosphate-producing, inorganic phosphate-dependent dephosphorylation (phosphorolysis) of seryl-phosphorylated HPr (P-Ser-HPr). The two antagonistic activities of HprK/P are regulated by several intracellular metabolites, which change their concentration in response to the absence or presence of rapidly metabolisable carbon sources (glucose, fructose, etc.) in the growth medium. Therefore, by controlling the phosphorylation state of HPr, HPrK/P is a sensor enzyme that plays a major role in the regulation of carbon metabolism and sugar transport: it mediates carbon catabolite repression (CCR), and regulates PTS-catalyzed carbohydrate uptake and inducer exclusion. The sequence is that of HPr kinase/phosphorylase from Staphylococcus aureus (strain Mu3 / ATCC 700698).